The chain runs to 528 residues: Serine/threonine-protein kinase akt-2 (528 aa).

The region spanning Asp12–Ser115 is the PH domain. Residues Glu121–Asp153 form a disordered region. A compositionally biased stretch (polar residues) spans Ala123–Asp153. The Protein kinase domain maps to Phe180–Phe437. ATP-binding positions include Leu186–Val194 and Lys209. Asp303 (proton acceptor) is an active-site residue. An AGC-kinase C-terminal domain is found at Lys438 to Ser515.

Belongs to the protein kinase superfamily. AGC Ser/Thr protein kinase family. RAC subfamily. Interacts with pdk-1, sgk-1, akt-1 and daf-16. Part of a complex containing sgk-1, akt-1 and akt-2. Mg(2+) serves as cofactor. In terms of tissue distribution, expressed in neurons, muscle cells of the pharynx, rectal gland cells, and spermatheca.

The enzyme catalyses L-seryl-[protein] + ATP = O-phospho-L-seryl-[protein] + ADP + H(+). It catalyses the reaction L-threonyl-[protein] + ATP = O-phospho-L-threonyl-[protein] + ADP + H(+). Phosphorylated and activated by pdk-1. Its function is as follows. Acts downstream of PI3 kinase age-1 and kinase pdk-1 in the daf-2/insulin receptor-like transduction pathway. Essential role in regulating developmental arrest at the dauer stage. Phosphorylates Forkhead-related daf-16 and the longevity-promoting skn-1 transcription factors, which inhibits their entry into the nucleus and antagonizes their functions. Role in immune function and pathogen resistance. Downstream of age-1 and together with akt-1 and sgk-1, promotes cell survival during embryonic development. Plays a role in maintaining the gonadal basement membrane through antagonizing akt-1 activity. The sequence is that of Serine/threonine-protein kinase akt-2 from Caenorhabditis elegans.